The following is a 463-amino-acid chain: Glutamate--tRNA ligase 1 (463 aa).

Residues 10–20 carry the 'HIGH' region motif; it reads PSPTGYLHIGG. A 'KMSKS' region motif is present at residues 238–242; the sequence is KLSKR. ATP is bound at residue K241.

This sequence belongs to the class-I aminoacyl-tRNA synthetase family. Glutamate--tRNA ligase type 1 subfamily. Monomer.

The protein localises to the cytoplasm. The catalysed reaction is tRNA(Glu) + L-glutamate + ATP = L-glutamyl-tRNA(Glu) + AMP + diphosphate. Catalyzes the attachment of glutamate to tRNA(Glu) in a two-step reaction: glutamate is first activated by ATP to form Glu-AMP and then transferred to the acceptor end of tRNA(Glu). This chain is Glutamate--tRNA ligase 1, found in Helicobacter pylori (strain ATCC 700392 / 26695) (Campylobacter pylori).